Consider the following 199-residue polypeptide: MNQVYFLDIFMFVFVLQFLFYFKEGMLNTLVKKFLNSLVGVFSYSNTLPLSSVISVFTFIILLTCCFGGYFTYSFCPCGMVEFTFVYAAVAWLSTLLTFISSEKFSVYMSKPGDTYLKTLSMLLVEIVSEFSRPLALTVRLTVNIMVGHLISMMLYQGLELSMGDQYVWLSIFAIMMECFVFFIQSYIFSRLIFLYLNE.

Helical transmembrane passes span 2–22 (NQVY…LFYF), 53–73 (VISV…YFTY), 80–100 (MVEF…LTFI), 141–161 (LTVN…GLEL), and 169–189 (WLSI…SYIF).

Belongs to the ATPase A chain family. As to quaternary structure, F-type ATPases have 2 components, CF(1) - the catalytic core - and CF(0) - the membrane proton channel. CF(1) has five subunits: alpha(3), beta(3), gamma(1), delta(1), epsilon(1). CF(0) has three main subunits: a, b and c.

It is found in the mitochondrion inner membrane. Functionally, mitochondrial membrane ATP synthase (F(1)F(0) ATP synthase or Complex V) produces ATP from ADP in the presence of a proton gradient across the membrane which is generated by electron transport complexes of the respiratory chain. F-type ATPases consist of two structural domains, F(1) - containing the extramembraneous catalytic core and F(0) - containing the membrane proton channel, linked together by a central stalk and a peripheral stalk. During catalysis, ATP synthesis in the catalytic domain of F(1) is coupled via a rotary mechanism of the central stalk subunits to proton translocation. Key component of the proton channel; it may play a direct role in the translocation of protons across the membrane. This is ATP synthase subunit a (atp6) from Caenorhabditis briggsae.